We begin with the raw amino-acid sequence, 102 residues long: Large ribosomal subunit protein uL24 (102 aa).

It belongs to the universal ribosomal protein uL24 family. As to quaternary structure, part of the 50S ribosomal subunit.

One of two assembly initiator proteins, it binds directly to the 5'-end of the 23S rRNA, where it nucleates assembly of the 50S subunit. Functionally, one of the proteins that surrounds the polypeptide exit tunnel on the outside of the subunit. This Allorhizobium ampelinum (strain ATCC BAA-846 / DSM 112012 / S4) (Agrobacterium vitis (strain S4)) protein is Large ribosomal subunit protein uL24.